The sequence spans 440 residues: Nuclear hormone receptor family member nhr-130 (440 aa).

The nuclear receptor DNA-binding region spans 34 to 110; sequence LYTCQVCALP…VGMDPGRFQF (77 aa). 2 NR C4-type zinc fingers span residues 37–57 and 74–93; these read CQVC…CRAC and CKKQ…CKKC. Residues 184-439 form the NR LBD domain; the sequence is EKPLIARNNL…FSHPEMFEDT (256 aa).

Belongs to the nuclear hormone receptor family.

The protein localises to the nucleus. Orphan nuclear receptor. The sequence is that of Nuclear hormone receptor family member nhr-130 (nhr-130) from Caenorhabditis elegans.